We begin with the raw amino-acid sequence, 160 residues long: Protein-export protein SecB (160 aa).

The protein belongs to the SecB family. As to quaternary structure, homotetramer, a dimer of dimers. One homotetramer interacts with 1 SecA dimer.

The protein resides in the cytoplasm. Its function is as follows. One of the proteins required for the normal export of preproteins out of the cell cytoplasm. It is a molecular chaperone that binds to a subset of precursor proteins, maintaining them in a translocation-competent state. It also specifically binds to its receptor SecA. The chain is Protein-export protein SecB from Nitrosomonas eutropha (strain DSM 101675 / C91 / Nm57).